A 2299-amino-acid polypeptide reads, in one-letter code: Protein Ycf2 (2299 aa).

Residue 1642 to 1649 participates in ATP binding; sequence GSIGTGRS.

This sequence belongs to the Ycf2 family.

It localises to the plastid. The protein resides in the chloroplast stroma. Functionally, probable ATPase of unknown function. Its presence in a non-photosynthetic plant (Epifagus virginiana) and experiments in tobacco indicate that it has an essential function which is probably not related to photosynthesis. This Nandina domestica (Heavenly bamboo) protein is Protein Ycf2.